Here is a 302-residue protein sequence, read N- to C-terminus: 33 kDa chaperonin (302 aa).

2 disulfide bridges follow: cysteine 240-cysteine 242 and cysteine 273-cysteine 276.

Belongs to the HSP33 family. Post-translationally, under oxidizing conditions two disulfide bonds are formed involving the reactive cysteines. Under reducing conditions zinc is bound to the reactive cysteines and the protein is inactive.

It localises to the cytoplasm. Redox regulated molecular chaperone. Protects both thermally unfolding and oxidatively damaged proteins from irreversible aggregation. Plays an important role in the bacterial defense system toward oxidative stress. In Synechocystis sp. (strain ATCC 27184 / PCC 6803 / Kazusa), this protein is 33 kDa chaperonin.